The chain runs to 208 residues: Uracil phosphoribosyltransferase (208 aa).

5-phospho-alpha-D-ribose 1-diphosphate contacts are provided by residues Arg78, Arg103, and 130 to 138 (DPMLATGGS). Uracil-binding positions include Ile193 and 198 to 200 (GDA). Position 199 (Asp199) interacts with 5-phospho-alpha-D-ribose 1-diphosphate.

Belongs to the UPRTase family. Mg(2+) serves as cofactor.

The enzyme catalyses UMP + diphosphate = 5-phospho-alpha-D-ribose 1-diphosphate + uracil. Its pathway is pyrimidine metabolism; UMP biosynthesis via salvage pathway; UMP from uracil: step 1/1. Allosterically activated by GTP. In terms of biological role, catalyzes the conversion of uracil and 5-phospho-alpha-D-ribose 1-diphosphate (PRPP) to UMP and diphosphate. The chain is Uracil phosphoribosyltransferase from Photobacterium profundum (strain SS9).